The sequence spans 286 residues: Hydroxysteroid 11-beta-dehydrogenase 1-like protein (286 aa).

A signal peptide spans 1–17; the sequence is MGIHIKRWCFIILVASA. Residues 39-65, 90-91, and 117-119 each bind NADP(+); these read GAST…TARR, DM, and NHI. Position 168 (Ser168) interacts with substrate. The active-site Proton acceptor is Tyr181. NADP(+) contacts are provided by residues 181–185 and 214–220; these read YAASK and GLIDTQS.

Belongs to the short-chain dehydrogenases/reductases (SDR) family.

It is found in the secreted. It catalyses the reaction cortisone + NADPH + H(+) = cortisol + NADP(+). Unidirectional NADP(+)-dependent cortisol dehydrogenase (in vitro). The polypeptide is Hydroxysteroid 11-beta-dehydrogenase 1-like protein (hsd11b1l) (Xenopus tropicalis (Western clawed frog)).